Consider the following 233-residue polypeptide: 3,4-dihydroxy-2-butanone 4-phosphate synthase (233 aa).

E37 is a Mg(2+) binding site. A Mn(2+)-binding site is contributed by E37. D41 is a binding site for D-ribulose 5-phosphate. C66 carries the S-glutathionyl cysteine modification. Residues T92 and 150–154 contribute to the D-ribulose 5-phosphate site; that span reads RRGHT. Mg(2+) is bound at residue H153. H153 provides a ligand contact to Mn(2+).

Homodimer. Mg(2+) serves as cofactor. Requires Mn(2+) as cofactor. Post-translationally, S-glutathionylation is reversible and dependent on a glutaredoxin.

The catalysed reaction is D-ribulose 5-phosphate = (2S)-2-hydroxy-3-oxobutyl phosphate + formate + H(+). It participates in cofactor biosynthesis; riboflavin biosynthesis; 2-hydroxy-3-oxobutyl phosphate from D-ribulose 5-phosphate: step 1/1. Catalyzes the conversion of D-ribulose 5-phosphate to formate and 3,4-dihydroxy-2-butanone 4-phosphate. This Pyricularia oryzae (strain 70-15 / ATCC MYA-4617 / FGSC 8958) (Rice blast fungus) protein is 3,4-dihydroxy-2-butanone 4-phosphate synthase (RIB3).